The chain runs to 225 residues: uncharacterized protein (225 aa).

The N-terminal stretch at 1 to 21 (MSLHYYLFIFWILAFVQFSHA) is a signal peptide.

As to expression, prismatic layer of shell (at protein level).

It localises to the secreted. This is an uncharacterized protein from Margaritifera margaritifera (Freshwater pearl mussel).